The chain runs to 73 residues: NAD(P)H-quinone oxidoreductase subunit L (73 aa).

A run of 2 helical transmembrane segments spans residues 6-26 and 44-64; these read SLIGLTYAGLAVLYLLVLPLL and VLMFFLVLFFFPGMVLLAPFM.

Belongs to the complex I NdhL subunit family. NDH-1 can be composed of about 15 different subunits; different subcomplexes with different compositions have been identified which probably have different functions.

It localises to the cellular thylakoid membrane. The catalysed reaction is a plastoquinone + NADH + (n+1) H(+)(in) = a plastoquinol + NAD(+) + n H(+)(out). It carries out the reaction a plastoquinone + NADPH + (n+1) H(+)(in) = a plastoquinol + NADP(+) + n H(+)(out). In terms of biological role, NDH-1 shuttles electrons from an unknown electron donor, via FMN and iron-sulfur (Fe-S) centers, to quinones in the respiratory and/or the photosynthetic chain. The immediate electron acceptor for the enzyme in this species is believed to be plastoquinone. Couples the redox reaction to proton translocation, and thus conserves the redox energy in a proton gradient. Cyanobacterial NDH-1 also plays a role in inorganic carbon-concentration. The sequence is that of NAD(P)H-quinone oxidoreductase subunit L from Synechococcus sp. (strain JA-2-3B'a(2-13)) (Cyanobacteria bacterium Yellowstone B-Prime).